Reading from the N-terminus, the 334-residue chain is Holliday junction branch migration complex subunit RuvB (334 aa).

The tract at residues 1–181 (MQDRLISGTE…FGIVQRLEFY (181 aa)) is large ATPase domain (RuvB-L). Residues Ile-20, Arg-21, Gly-62, Lys-65, Thr-66, Thr-67, 128 to 130 (EDY), Arg-171, Tyr-181, and Arg-218 each bind ATP. Thr-66 provides a ligand contact to Mg(2+). The small ATPAse domain (RuvB-S) stretch occupies residues 182-252 (SVEDLTHIVS…MAQRALDMLN (71 aa)). The interval 255 to 334 (KAGLDTLDRR…FGMTPPEPKN (80 aa)) is head domain (RuvB-H). DNA contacts are provided by Arg-310 and Arg-315.

This sequence belongs to the RuvB family. As to quaternary structure, homohexamer. Forms an RuvA(8)-RuvB(12)-Holliday junction (HJ) complex. HJ DNA is sandwiched between 2 RuvA tetramers; dsDNA enters through RuvA and exits via RuvB. An RuvB hexamer assembles on each DNA strand where it exits the tetramer. Each RuvB hexamer is contacted by two RuvA subunits (via domain III) on 2 adjacent RuvB subunits; this complex drives branch migration. In the full resolvosome a probable DNA-RuvA(4)-RuvB(12)-RuvC(2) complex forms which resolves the HJ.

It localises to the cytoplasm. It catalyses the reaction ATP + H2O = ADP + phosphate + H(+). The RuvA-RuvB-RuvC complex processes Holliday junction (HJ) DNA during genetic recombination and DNA repair, while the RuvA-RuvB complex plays an important role in the rescue of blocked DNA replication forks via replication fork reversal (RFR). RuvA specifically binds to HJ cruciform DNA, conferring on it an open structure. The RuvB hexamer acts as an ATP-dependent pump, pulling dsDNA into and through the RuvAB complex. RuvB forms 2 homohexamers on either side of HJ DNA bound by 1 or 2 RuvA tetramers; 4 subunits per hexamer contact DNA at a time. Coordinated motions by a converter formed by DNA-disengaged RuvB subunits stimulates ATP hydrolysis and nucleotide exchange. Immobilization of the converter enables RuvB to convert the ATP-contained energy into a lever motion, pulling 2 nucleotides of DNA out of the RuvA tetramer per ATP hydrolyzed, thus driving DNA branch migration. The RuvB motors rotate together with the DNA substrate, which together with the progressing nucleotide cycle form the mechanistic basis for DNA recombination by continuous HJ branch migration. Branch migration allows RuvC to scan DNA until it finds its consensus sequence, where it cleaves and resolves cruciform DNA. This is Holliday junction branch migration complex subunit RuvB from Acinetobacter baumannii (strain AB307-0294).